The chain runs to 435 residues: ATP-dependent protease ATPase subunit HslU (435 aa).

ATP contacts are provided by residues I18, 60 to 65 (GVGKTE), D248, E313, and R385.

This sequence belongs to the ClpX chaperone family. HslU subfamily. A double ring-shaped homohexamer of HslV is capped on each side by a ring-shaped HslU homohexamer. The assembly of the HslU/HslV complex is dependent on binding of ATP.

It localises to the cytoplasm. ATPase subunit of a proteasome-like degradation complex; this subunit has chaperone activity. The binding of ATP and its subsequent hydrolysis by HslU are essential for unfolding of protein substrates subsequently hydrolyzed by HslV. HslU recognizes the N-terminal part of its protein substrates and unfolds these before they are guided to HslV for hydrolysis. This chain is ATP-dependent protease ATPase subunit HslU, found in Agrobacterium fabrum (strain C58 / ATCC 33970) (Agrobacterium tumefaciens (strain C58)).